The following is a 77-amino-acid chain: Translation initiation factor IF-1, chloroplastic (77 aa).

Residues 1–71 (MKEQKLIHEG…TRGRIIYRLR (71 aa)) enclose the S1-like domain.

Belongs to the IF-1 family. As to quaternary structure, component of the 30S ribosomal translation pre-initiation complex which assembles on the 30S ribosome in the order IF-2 and IF-3, IF-1 and N-formylmethionyl-tRNA(fMet); mRNA recruitment can occur at any time during PIC assembly.

The protein localises to the plastid. It localises to the chloroplast. Functionally, one of the essential components for the initiation of protein synthesis. Stabilizes the binding of IF-2 and IF-3 on the 30S subunit to which N-formylmethionyl-tRNA(fMet) subsequently binds. Helps modulate mRNA selection, yielding the 30S pre-initiation complex (PIC). Upon addition of the 50S ribosomal subunit IF-1, IF-2 and IF-3 are released leaving the mature 70S translation initiation complex. This Calycanthus floridus var. glaucus (Eastern sweetshrub) protein is Translation initiation factor IF-1, chloroplastic.